The following is a 181-amino-acid chain: Putative manganese efflux pump MntP (181 aa).

Helical transmembrane passes span 3–23 (LIFL…ANGA), 42–62 (IFQA…VGFI), 63–83 (SYID…KMIK), 101–121 (LMLG…TFSF), 124–144 (INIA…CVIA), and 160–180 (LVLG…THLI).

Belongs to the MntP (TC 9.B.29) family.

The protein localises to the cell inner membrane. In terms of biological role, probably functions as a manganese efflux pump. This chain is Putative manganese efflux pump MntP, found in Campylobacter fetus subsp. fetus (strain 82-40).